Reading from the N-terminus, the 337-residue chain is Tryptophan--tRNA ligase (337 aa).

ATP is bound by residues 11–13 (QPT) and 19–20 (GN). Positions 12-20 (PTGALHLGN) match the 'HIGH' region motif. Asp135 contributes to the L-tryptophan binding site. Residues 147–149 (GED), Val191, and 200–204 (KMSKS) each bind ATP. A 'KMSKS' region motif is present at residues 200–204 (KMSKS).

This sequence belongs to the class-I aminoacyl-tRNA synthetase family. As to quaternary structure, homodimer.

The protein localises to the cytoplasm. It catalyses the reaction tRNA(Trp) + L-tryptophan + ATP = L-tryptophyl-tRNA(Trp) + AMP + diphosphate + H(+). Catalyzes the attachment of tryptophan to tRNA(Trp). This chain is Tryptophan--tRNA ligase, found in Prochlorococcus marinus (strain MIT 9313).